A 142-amino-acid chain; its full sequence is Large ribosomal subunit protein uL11 (142 aa).

The protein belongs to the universal ribosomal protein uL11 family. As to quaternary structure, part of the ribosomal stalk of the 50S ribosomal subunit. Interacts with L10 and the large rRNA to form the base of the stalk. L10 forms an elongated spine to which L12 dimers bind in a sequential fashion forming a multimeric L10(L12)X complex. In terms of processing, one or more lysine residues are methylated.

Functionally, forms part of the ribosomal stalk which helps the ribosome interact with GTP-bound translation factors. This Parvibaculum lavamentivorans (strain DS-1 / DSM 13023 / NCIMB 13966) protein is Large ribosomal subunit protein uL11.